A 296-amino-acid chain; its full sequence is 4-diphosphocytidyl-2-C-methyl-D-erythritol kinase (296 aa).

Residue lysine 14 is part of the active site. 97-107 (PMGAGMGGGSS) is a binding site for ATP. Residue aspartate 139 is part of the active site.

Belongs to the GHMP kinase family. IspE subfamily.

It catalyses the reaction 4-CDP-2-C-methyl-D-erythritol + ATP = 4-CDP-2-C-methyl-D-erythritol 2-phosphate + ADP + H(+). It functions in the pathway isoprenoid biosynthesis; isopentenyl diphosphate biosynthesis via DXP pathway; isopentenyl diphosphate from 1-deoxy-D-xylulose 5-phosphate: step 3/6. Catalyzes the phosphorylation of the position 2 hydroxy group of 4-diphosphocytidyl-2C-methyl-D-erythritol. This chain is 4-diphosphocytidyl-2-C-methyl-D-erythritol kinase, found in Polynucleobacter necessarius subsp. necessarius (strain STIR1).